Consider the following 268-residue polypeptide: Phosphatidylglycerol--prolipoprotein diacylglyceryl transferase (268 aa).

4 helical membrane-spanning segments follow: residues 23 to 43 (WYAL…LALA), 58 to 78 (FLTW…VLFY), 96 to 116 (GGMS…LFCW), and 119 to 139 (GLSP…GLFF). Arg-141 contacts a 1,2-diacyl-sn-glycero-3-phospho-(1'-sn-glycerol). A run of 3 helical transmembrane segments spans residues 181-201 (SFLE…MPAV), 206-226 (GMTA…AEFF), and 238-258 (AGAT…VWLV).

The protein belongs to the Lgt family.

It is found in the cell inner membrane. The enzyme catalyses L-cysteinyl-[prolipoprotein] + a 1,2-diacyl-sn-glycero-3-phospho-(1'-sn-glycerol) = an S-1,2-diacyl-sn-glyceryl-L-cysteinyl-[prolipoprotein] + sn-glycerol 1-phosphate + H(+). It functions in the pathway protein modification; lipoprotein biosynthesis (diacylglyceryl transfer). Catalyzes the transfer of the diacylglyceryl group from phosphatidylglycerol to the sulfhydryl group of the N-terminal cysteine of a prolipoprotein, the first step in the formation of mature lipoproteins. The protein is Phosphatidylglycerol--prolipoprotein diacylglyceryl transferase of Azospirillum brasilense.